A 296-amino-acid chain; its full sequence is MDMSSIASRLGLSGSRPVVGKAAELRRLCDVTFDSSVLGIGEVCKAIICLEIAASKFQVIFDRAEAVRMSGMSEKAYIRSFNALQNGLGVKTTLDVRELGIQFGCVRLIPFVQKGLSLYKERFLAALPPSRRASTDFGRPVFTAASFYLCAKRHKLKVDKLKLIDLCGTSSSEFTTVSTSMADLCFDVFGIAKEKKDAKSIKGSRELLDVLPSKRKHDDDSDSSGESSGDDQDELDLPTYKRHKKMEKEAYNDWKSSVLSSNKQTKPDPAKPRKQAQLNFKKKPSDMALEVSSAAN.

The tract at residues 212 to 296 (PSKRKHDDDS…MALEVSSAAN (85 aa)) is disordered. A compositionally biased stretch (acidic residues) spans 220 to 236 (DSDSSGESSGDDQDELD). A compositionally biased stretch (polar residues) spans 254-264 (WKSSVLSSNKQ).

It belongs to the ORC6 family. In terms of assembly, component of the origin recognition complex (ORC) composed of at least ORC1, ORC2, ORC3, ORC4, ORC5 and ORC6. ORC is regulated in a cell-cycle and development dependent manner. It is sequentially assembled at the exit from anaphase of mitosis and disassembled as cells enter S phase.

It is found in the nucleus. Its function is as follows. Component of the origin recognition complex (ORC) that binds origins of replication. DNA-binding is ATP-dependent. The specific DNA sequences that define origins of replication have not been identified yet. ORC is required to assemble the pre-replication complex necessary to initiate DNA replication. The sequence is that of Origin of replication complex subunit 6 from Oryza sativa subsp. indica (Rice).